The primary structure comprises 147 residues: UPF0735 ACT domain-containing protein ABC1543 (147 aa).

In terms of domain architecture, ACT spans 70-145 (TFSINLADRS…SVERVELVGS (76 aa)).

This sequence belongs to the UPF0735 family.

The protein is UPF0735 ACT domain-containing protein ABC1543 of Shouchella clausii (strain KSM-K16) (Alkalihalobacillus clausii).